Reading from the N-terminus, the 448-residue chain is Probable rhamnogalacturonase E (448 aa).

Positions 1 to 22 are cleaved as a signal peptide; that stretch reads MTWSTSFLVATSLLSIINSVHA. A disulfide bond links cysteine 43 and cysteine 69. N-linked (GlcNAc...) asparagine glycosylation is found at asparagine 54, asparagine 92, and asparagine 131. Residue aspartate 221 is the Proton donor of the active site. Cysteine 223 and cysteine 240 are disulfide-bonded. 2 N-linked (GlcNAc...) asparagine glycosylation sites follow: asparagine 256 and asparagine 284. Residue histidine 296 is part of the active site. N-linked (GlcNAc...) asparagine glycans are attached at residues asparagine 323 and asparagine 328. 2 cysteine pairs are disulfide-bonded: cysteine 346–cysteine 352 and cysteine 374–cysteine 382.

The protein belongs to the glycosyl hydrolase 28 family.

The protein resides in the secreted. Pectinolytic enzymes consist of four classes of enzymes: pectine lyase, polygalacturonase, pectin methylesterase and rhamnogalacturonase. Hydrolyzes alpha-D-galacturonopyranosyl-(1,2)-alpha-L-rhamnopyranosyl linkages in the backbone of the hairy regions of pectins. This Aspergillus niger (strain ATCC MYA-4892 / CBS 513.88 / FGSC A1513) protein is Probable rhamnogalacturonase E (rhgE).